A 327-amino-acid chain; its full sequence is Lipoyl synthase (327 aa).

Positions 72, 77, 83, 98, 102, 105, and 313 each coordinate [4Fe-4S] cluster. Positions 83-302 constitute a Radical SAM core domain; the sequence is CWSHGTATIM…RKVGLEKGFL (220 aa).

The protein belongs to the radical SAM superfamily. Lipoyl synthase family. Requires [4Fe-4S] cluster as cofactor.

Its subcellular location is the cytoplasm. The catalysed reaction is [[Fe-S] cluster scaffold protein carrying a second [4Fe-4S](2+) cluster] + N(6)-octanoyl-L-lysyl-[protein] + 2 oxidized [2Fe-2S]-[ferredoxin] + 2 S-adenosyl-L-methionine + 4 H(+) = [[Fe-S] cluster scaffold protein] + N(6)-[(R)-dihydrolipoyl]-L-lysyl-[protein] + 4 Fe(3+) + 2 hydrogen sulfide + 2 5'-deoxyadenosine + 2 L-methionine + 2 reduced [2Fe-2S]-[ferredoxin]. Its pathway is protein modification; protein lipoylation via endogenous pathway; protein N(6)-(lipoyl)lysine from octanoyl-[acyl-carrier-protein]: step 2/2. Its function is as follows. Catalyzes the radical-mediated insertion of two sulfur atoms into the C-6 and C-8 positions of the octanoyl moiety bound to the lipoyl domains of lipoate-dependent enzymes, thereby converting the octanoylated domains into lipoylated derivatives. In Francisella tularensis subsp. mediasiatica (strain FSC147), this protein is Lipoyl synthase.